The primary structure comprises 99 residues: Protein SPIRAL1-like 5 (99 aa).

The segment covering 1–12 (MSRGGSFGGGQS) has biased composition (gly residues). A disordered region spans residues 1–99 (MSRGGSFGGG…SSLGYLFGDK (99 aa)). Positions 27–39 (TPAPPVAPKPAPP) are enriched in pro residues. Residues 56–73 (KISNNNYQRVQGQNSGNF) are compositionally biased toward polar residues. At Ser58 the chain carries Phosphoserine.

Belongs to the SPIRAL1 family. Expressed exclusively in stems and flowers.

Acts redundantly with SPR1 in maintaining the cortical microtubules organization essential for anisotropic cell growth. The polypeptide is Protein SPIRAL1-like 5 (SP1L5) (Arabidopsis thaliana (Mouse-ear cress)).